The chain runs to 90 residues: Small ribosomal subunit protein uS15c (90 aa).

As to quaternary structure, component of the chloroplast small ribosomal subunit (SSU). Mature 70S chloroplast ribosomes of higher plants consist of a small (30S) and a large (50S) subunit. The 30S small subunit contains 1 molecule of ribosomal RNA (16S rRNA) and 24 different proteins. The 50S large subunit contains 3 rRNA molecules (23S, 5S and 4.5S rRNA) and 33 different proteins.

The protein resides in the plastid. The protein localises to the chloroplast. Functionally, component of the chloroplast ribosome (chloro-ribosome), a dedicated translation machinery responsible for the synthesis of chloroplast genome-encoded proteins, including proteins of the transcription and translation machinery and components of the photosynthetic apparatus. This is Small ribosomal subunit protein uS15c (rps15) from Spinacia oleracea (Spinach).